We begin with the raw amino-acid sequence, 122 residues long: MIQAQSYLNVADNSGAKKIMCIRVLGGSQRKYAAIGDVIIGVVKDSVPNMSLKKSEVVRAVVVRTCKGIRRENGMTIRFDDNAAVVINKDGNPKGTRVFGPVARELRDRNFTKIVSLAPEVL.

Belongs to the universal ribosomal protein uL14 family. Part of the 50S ribosomal subunit.

The protein localises to the plastid. Its subcellular location is the chloroplast. In terms of biological role, binds to 23S rRNA. This chain is Large ribosomal subunit protein uL14c, found in Mesostigma viride (Green alga).